Here is a 91-residue protein sequence, read N- to C-terminus: Bombyxin C-1 (91 aa).

The first 19 residues, 1-19 (MKLVMLLVVVSAMLVLGGA), serve as a signal peptide directing secretion. Gln-20 carries the pyrrolidone carboxylic acid modification. Disulfide bonds link Cys-27/Cys-76, Cys-39/Cys-89, and Cys-75/Cys-80. A propeptide spans 47-67 (SGSQYAGYGWPWLPPFSSSRG) (c peptide like).

It belongs to the insulin family. As to quaternary structure, heterodimer of a B chain and an A chain linked by two disulfide bonds.

Its subcellular location is the secreted. Brain peptide responsible for activation of prothoracic glands to produce ecdysone in insects. This Bombyx mori (Silk moth) protein is Bombyxin C-1 (BBXC1).